The primary structure comprises 290 residues: Porphobilinogen deaminase (290 aa).

At C237 the chain carries S-(dipyrrolylmethanemethyl)cysteine.

The protein belongs to the HMBS family. In terms of assembly, monomer. The cofactor is dipyrromethane.

It catalyses the reaction 4 porphobilinogen + H2O = hydroxymethylbilane + 4 NH4(+). It functions in the pathway porphyrin-containing compound metabolism; protoporphyrin-IX biosynthesis; coproporphyrinogen-III from 5-aminolevulinate: step 2/4. Its function is as follows. Tetrapolymerization of the monopyrrole PBG into the hydroxymethylbilane pre-uroporphyrinogen in several discrete steps. This is Porphobilinogen deaminase from Clostridium botulinum (strain 657 / Type Ba4).